Here is a 143-residue protein sequence, read N- to C-terminus: Cytotoxic L-amino-acid oxidase (143 aa).

It belongs to the flavin monoamine oxidase family. FAD is required as a cofactor.

The catalysed reaction is an L-alpha-amino acid + O2 + H2O = a 2-oxocarboxylate + H2O2 + NH4(+). Its function is as follows. Cytotoxic L-amino acid oxidase with high oxidase activity towards DL-methionine and L-methionine, L-phenylalanine, DL-norleucine, L-isoleucine, L-arginine, L-tyrosine, and DL-leucine. Shows relatively low activity towards DL-lysine and L-lysine, DL-asparagine, DL-valine, L-histidine, DL-threonine, DL-tryptophan, and L-glutamic acid; and no activity towards L-cysteine, L-glycine, L-proline, L-oxyproline, DL-serine, and DL-aspartic acid. Does not use benzylamine, ethanolamine, diethylamine, meta- and para-phenylendiamine, ortho-, meta- and para-aminophenols, or putrescin as a substrate. Acts as a toxin by inducing chromatin condensation, as well as DNA and nucleus fragmentation, which are typical for apoptosis. Probably induces cell damage indirectly via the generation of free radicals and oxidant agents that can trigger cell impairment and apoptosis by a caspase-independent pathway. The chain is Cytotoxic L-amino-acid oxidase from Amanita phalloides (Death cap).